The sequence spans 221 residues: Glutathione S-transferase class-mu 26 kDa isozyme 1 (221 aa).

The GST N-terminal domain occupies 2-82 (PAKLGYWKIR…YIADKHGMIG (81 aa)). Glutathione is bound by residues 7-8 (YW), 40-44 (WFSKK), 53-54 (NL), and 66-67 (QS). The GST C-terminal domain occupies 84-202 (TPEERARVSM…ESNRFIKWPL (119 aa)). Tyrosine 110 provides a ligand contact to substrate.

It belongs to the GST superfamily. Mu family. Homodimer.

It catalyses the reaction RX + glutathione = an S-substituted glutathione + a halide anion + H(+). Conjugation of reduced glutathione to a wide number of exogenous and endogenous hydrophobic electrophiles. In terms of biological role, GST isoenzymes appear to play a central role in the parasite detoxification system. Other functions are also suspected including a role in increasing the solubility of haematin in the parasite gut. The chain is Glutathione S-transferase class-mu 26 kDa isozyme 1 from Fasciola hepatica (Liver fluke).